Here is a 673-residue protein sequence, read N- to C-terminus: Protein kinase C delta type (673 aa).

One can recognise a C2 domain in the interval 1–106 (MAPFLRISFN…KNNGKAEFWL (106 aa)). Phosphothreonine is present on residues threonine 43 and threonine 50. Tyrosine 64 is modified (phosphotyrosine). Serine 130 is modified (phosphoserine). Threonine 141 carries the phosphothreonine modification. Position 155 is a phosphotyrosine (tyrosine 155). The Phorbol-ester/DAG-type 1 zinc finger occupies 158–208 (NHEFIATFFGQPTFCSVCKEFVWGLNKQGYKCRQCNAAIHKKCIDKIIGRC). Residue threonine 218 is modified to Phosphothreonine. The Phorbol-ester/DAG-type 2 zinc finger occupies 230–280 (PHRFKVYNYMSPTFCDHCGTLLWGLVKQGLKCEDCGMNVHHKCREKVANLC). At serine 299 the chain carries Phosphoserine; by autocatalysis. Phosphotyrosine; by SRC occurs at positions 311 and 332. The region spanning 347 to 601 (FTFQKVLGKG…TGNIRLHPFF (255 aa)) is the Protein kinase domain. 353-361 (LGKGSFGKV) provides a ligand contact to ATP. The residue at position 372 (tyrosine 372) is a Phosphotyrosine. ATP is bound at residue lysine 376. The residue at position 449 (threonine 449) is a Phosphothreonine. Residue aspartate 471 is the Proton acceptor of the active site. Serine 504 is modified (phosphoserine). The residue at position 505 (threonine 505) is a Phosphothreonine; by autocatalysis. Phosphotyrosine is present on tyrosine 565. The AGC-kinase C-terminal domain maps to 602–673 (KTINWNLLEK…VNPKYEQFLE (72 aa)). Phosphoserine occurs at positions 643, 652, and 662.

Belongs to the protein kinase superfamily. AGC Ser/Thr protein kinase family. PKC subfamily. In terms of assembly, interacts with PDPK1 (via N-terminal region). Interacts with RAD9A. Interacts with CDCP1. Interacts with MUC1. Interacts with VASP. Interacts with CAVIN3. Interacts with PRKD2 (via N-terminus and zing-finger domain 1 and 2) in response to oxidative stress; the interaction is independent of PRKD2 tyrosine phosphorylation. Interacts with PLSC3; interaction is enhanced by UV irradiation. Post-translationally, autophosphorylated and/or phosphorylated at Thr-505, within the activation loop; phosphorylation at Thr-505 is not a prerequisite for enzymatic activity. Autophosphorylated at Ser-299. Upon TNFSF10/TRAIL treatment, phosphorylated at Tyr-155; phosphorylation is required for its translocation to the endoplasmic reticulum and cleavage by caspase-3. Phosphorylated at Tyr-311, Tyr-332 and Tyr-565; phosphorylation of Tyr-311 and Tyr-565 following thrombin or zymosan stimulation potentiates its kinase activity. Phosphorylated by protein kinase PDPK1; phosphorylation is inhibited by the apoptotic C-terminal cleavage product of PKN2. Phosphorylated at Tyr-311 and Tyr-332 by SRC; phosphorylation leads to enhanced autophosphorylation at Thr-505. Phosphorylated at Tyr-311 through a SYK and SRC mechanism downstream of C-type lectin receptors activation, promoting its activation. In terms of processing, proteolytically cleaved into a catalytic subunit and a regulatory subunit by caspase-3 during apoptosis which results in kinase activation.

It localises to the cytoplasm. Its subcellular location is the nucleus. It is found in the perinuclear region. The protein localises to the cell membrane. The protein resides in the mitochondrion. It localises to the endomembrane system. The catalysed reaction is L-seryl-[protein] + ATP = O-phospho-L-seryl-[protein] + ADP + H(+). It carries out the reaction L-threonyl-[protein] + ATP = O-phospho-L-threonyl-[protein] + ADP + H(+). It catalyses the reaction L-tyrosyl-[protein] + ATP = O-phospho-L-tyrosyl-[protein] + ADP + H(+). Its activity is regulated as follows. Novel PKCs (PRKCD, PRKCE, PRKCH and PRKCQ) are calcium-insensitive, but activated by diacylglycerol (DAG) and phosphatidylserine. Three specific sites; Thr-505 (activation loop of the kinase domain), Ser-643 (turn motif) and Ser-662 (hydrophobic region), need to be phosphorylated for its full activation. Activated by caspase-3 (CASP3) cleavage during apoptosis. After cleavage, the pseudosubstrate motif in the regulatory subunit is released from the substrate recognition site of the catalytic subunit, which enables PRKCD to become constitutively activated. The catalytic subunit which displays properties of a sphingosine-dependent protein kinase is activated by D-erythro-sphingosine (Sph) or N,N-dimethyl-D-erythrosphingosine (DMS) or N,N,N-trimethyl-D-erythrosphingosine (TMS), but not by ceramide or Sph-1-P and is strongly inhibited by phosphatidylserine. Functionally, calcium-independent, phospholipid- and diacylglycerol (DAG)-dependent serine/threonine-protein kinase that plays contrasting roles in cell death and cell survival by functioning as a pro-apoptotic protein during DNA damage-induced apoptosis, but acting as an anti-apoptotic protein during cytokine receptor-initiated cell death, is involved in tumor suppression, is required for oxygen radical production by NADPH oxidase and acts as a positive or negative regulator in platelet functional responses. Upon DNA damage, activates the promoter of the death-promoting transcription factor BCLAF1/Btf to trigger BCLAF1-mediated p53/TP53 gene transcription and apoptosis. In response to oxidative stress, interact with and activate CHUK/IKKA in the nucleus, causing the phosphorylation of p53/TP53. In the case of ER stress or DNA damage-induced apoptosis, can form a complex with the tyrosine-protein kinase ABL1 which trigger apoptosis independently of p53/TP53. In cytosol can trigger apoptosis by activating MAPK11 or MAPK14, inhibiting AKT1 and decreasing the level of X-linked inhibitor of apoptosis protein (XIAP), whereas in nucleus induces apoptosis via the activation of MAPK8 or MAPK9. Upon ionizing radiation treatment, is required for the activation of the apoptosis regulators BAX and BAK, which trigger the mitochondrial cell death pathway. Can phosphorylate MCL1 and target it for degradation which is sufficient to trigger for BAX activation and apoptosis. Is required for the control of cell cycle progression both at G1/S and G2/M phases. Mediates phorbol 12-myristate 13-acetate (PMA)-induced inhibition of cell cycle progression at G1/S phase by up-regulating the CDK inhibitor CDKN1A/p21 and inhibiting the cyclin CCNA2 promoter activity. In response to UV irradiation can phosphorylate CDK1, which is important for the G2/M DNA damage checkpoint activation. Can protect glioma cells from the apoptosis induced by TNFSF10/TRAIL, probably by inducing increased phosphorylation and subsequent activation of AKT1. Can also act as tumor suppressor upon mitogenic stimulation with PMA or TPA. In N-formyl-methionyl-leucyl-phenylalanine (fMLP)-treated cells, is required for NCF1 (p47-phox) phosphorylation and activation of NADPH oxidase activity, and regulates TNF-elicited superoxide anion production in neutrophils, by direct phosphorylation and activation of NCF1 or indirectly through MAPK1/3 (ERK1/2) signaling pathways. Involved in antifungal immunity by mediating phosphorylation and activation of CARD9 downstream of C-type lectin receptors activation, promoting interaction between CARD9 and BCL10, followed by activation of NF-kappa-B and MAP kinase p38 pathways. May also play a role in the regulation of NADPH oxidase activity in eosinophil after stimulation with IL5, leukotriene B4 or PMA. In collagen-induced platelet aggregation, acts a negative regulator of filopodia formation and actin polymerization by interacting with and negatively regulating VASP phosphorylation. Downstream of PAR1, PAR4 and CD36/GP4 receptors, regulates differentially platelet dense granule secretion; acts as a positive regulator in PAR-mediated granule secretion, whereas it negatively regulates CD36/GP4-mediated granule release. Phosphorylates MUC1 in the C-terminal and regulates the interaction between MUC1 and beta-catenin. The catalytic subunit phosphorylates 14-3-3 proteins (YWHAB, YWHAZ and YWHAH) in a sphingosine-dependent fashion. Phosphorylates ELAVL1 in response to angiotensin-2 treatment. Phosphorylates mitochondrial phospholipid scramblase 3 (PLSCR3), resulting in increased cardiolipin expression on the mitochondrial outer membrane which facilitates apoptosis. Phosphorylates SMPD1 which induces SMPD1 secretion. Its function is as follows. Truncated isoform 2 is inactive. The sequence is that of Protein kinase C delta type from Rattus norvegicus (Rat).